Reading from the N-terminus, the 193-residue chain is MVMEVPREIIEKLEIFQKLVKKWNKSINLVSDNTIHNFWQRHILDSLQLIQYIDNKEIHLVDIGSGSGLPGIVLSIAGVAQVSLIEADLRKCIFLEKASKISNNNIQIINQRIEKIEIDCSILTCRAFSNLNTIFNCIKNISVREKFLLLKGKNYLTEIVEAKERWLFGYLIHQSITCEEGKILEVSNLTKMI.

S-adenosyl-L-methionine contacts are provided by residues G64, L69, 113–114, and R126; that span reads IE.

Belongs to the methyltransferase superfamily. RNA methyltransferase RsmG family.

It localises to the cytoplasm. The enzyme catalyses guanosine(527) in 16S rRNA + S-adenosyl-L-methionine = N(7)-methylguanosine(527) in 16S rRNA + S-adenosyl-L-homocysteine. Its function is as follows. Specifically methylates the N7 position of guanine in position 527 of 16S rRNA. The chain is Ribosomal RNA small subunit methyltransferase G from Rickettsia massiliae (strain Mtu5).